The chain runs to 354 residues: CX3C chemokine receptor 1 (354 aa).

Over 1–32 the chain is Extracellular; that stretch reads MPTSFPELDLENFEYDDSAEACYLGDIVAFGT. A helical membrane pass occupies residues 33–60; it reads IFLSIFYSLVFTFGLVGNLLVVLALTNS. Topologically, residues 61 to 70 are cytoplasmic; that stretch reads RKSKSITDIY. The helical transmembrane segment at 71-91 threads the bilayer; it reads LLNLALSDLLFVATLPFWTHY. The Extracellular portion of the chain corresponds to 92–104; that stretch reads LISHEGLHNAMCK. A disulfide bond links Cys103 and Cys176. The helical transmembrane segment at 105-126 threads the bilayer; sequence LTTAFFFIGFFGGIFFITVISI. At 127–143 the chain is on the cytoplasmic side; that stretch reads DRYLAIVLAANSMNNRT. The chain crosses the membrane as a helical span at residues 144–168; sequence VQHGVTISLGVWAAAILVASPQFMF. The Extracellular portion of the chain corresponds to 169–196; the sequence is TKRKDNECLGDYPEVLQEIWPVLRNSEV. A helical membrane pass occupies residues 197–216; that stretch reads NILGFVLPLLIMSFCYFRIV. Residues 217-232 lie on the Cytoplasmic side of the membrane; sequence RTLFSCKNRKKARAIR. A helical transmembrane segment spans residues 233 to 257; sequence LILLVVVVFFLFWTPYNIVIFLETL. Topologically, residues 258–274 are extracellular; that stretch reads KFYNFFPSCGMKRDLRW. A helical membrane pass occupies residues 275 to 298; sequence ALSVTETVAFSHCCLNPFIYAFAG. The Cytoplasmic portion of the chain corresponds to 299–354; it reads EKFRRYLRHLYNKCLAVLCGRPVHAGFSTESQRSRQDSILSSLTHYTSEGEGSLLL. Thr345 is subject to Phosphothreonine.

The protein belongs to the G-protein coupled receptor 1 family. In terms of assembly, found in a ternary complex with CX3CL1 and ITGAV:ITGB3 or ITGA4:ITGB1. In terms of processing, this protein is not N-glycosylated which is unusual for G-protein-coupled receptors. As to expression, most abundant in adult spinal cord, brain, kidney, gut, uterus and testes.

It localises to the cell membrane. In terms of biological role, receptor for the C-X3-C chemokine fractalkine (CX3CL1) present on many early leukocyte cells; CX3CR1-CX3CL1 signaling exerts distinct functions in different tissue compartments, such as immune response, inflammation, cell adhesion and chemotaxis. CX3CR1-CX3CL1 signaling mediates cell migratory functions. Responsible for the recruitment of natural killer (NK) cells to inflamed tissues. Acts as a regulator of inflammation process leading to atherogenesis by mediating macrophage and monocyte recruitment to inflamed atherosclerotic plaques, promoting cell survival. Involved in airway inflammation by promoting interleukin 2-producing T helper (Th2) cell survival in inflamed lung. Involved in the migration of circulating monocytes to non-inflamed tissues, where they differentiate into macrophages and dendritic cells. Acts as a negative regulator of angiogenesis, probably by promoting macrophage chemotaxis. Plays a key role in brain microglia by regulating inflammatory response in the central nervous system (CNS) and regulating synapse maturation. Required to restrain the microglial inflammatory response in the CNS and the resulting parenchymal damage in response to pathological stimuli. Involved in brain development by participating in synaptic pruning, a natural process during which brain microglia eliminates extra synapses during postnatal development. Synaptic pruning by microglia is required to promote the maturation of circuit connectivity during brain development. Acts as an important regulator of the gut microbiota by controlling immunity to intestinal bacteria and fungi. Expressed in lamina propria dendritic cells in the small intestine, which form transepithelial dendrites capable of taking up bacteria in order to provide defense against pathogenic bacteria. Required to initiate innate and adaptive immune responses against dissemination of commensal fungi (mycobiota) component of the gut: expressed in mononuclear phagocytes (MNPs) and acts by promoting induction of antifungal IgG antibodies response to confer protection against disseminated C.albicans or C.auris infection. Also acts as a receptor for C-C motif chemokine CCL26, inducing cell chemotaxis. This chain is CX3C chemokine receptor 1, found in Rattus norvegicus (Rat).